The primary structure comprises 254 residues: MKIGVYGASGRIGKLLLEELKGGYKGLELSSVFVRQKCETDFSSFSHAPLVTNDLKAFVRACECVIDFSLPKGVDHLLEALLECPKILVSGTTGLEKETLEKMQKLALKAPLLHAHNMSIGIMMLNQLAFLASLKLKDADIEIIETHHNLKKDAPSGTALSLYETCAKARGYDEKNALTTHREGLRSKESIGIAALRGGDVAGKHTIGFYLEGEYIELSHTATNRSIFAKGALEVALWLKDKAAKKYEINEMFG.

7–12 (GASGRI) is a binding site for NAD(+). Residue arginine 35 coordinates NADP(+). NAD(+) contacts are provided by residues 91 to 93 (GTT) and 115 to 118 (AHNM). Catalysis depends on histidine 147, which acts as the Proton donor/acceptor. Residue histidine 148 coordinates (S)-2,3,4,5-tetrahydrodipicolinate. Lysine 151 (proton donor) is an active-site residue. 157-158 (GT) is a (S)-2,3,4,5-tetrahydrodipicolinate binding site.

It belongs to the DapB family.

The protein localises to the cytoplasm. It carries out the reaction (S)-2,3,4,5-tetrahydrodipicolinate + NAD(+) + H2O = (2S,4S)-4-hydroxy-2,3,4,5-tetrahydrodipicolinate + NADH + H(+). The catalysed reaction is (S)-2,3,4,5-tetrahydrodipicolinate + NADP(+) + H2O = (2S,4S)-4-hydroxy-2,3,4,5-tetrahydrodipicolinate + NADPH + H(+). Its pathway is amino-acid biosynthesis; L-lysine biosynthesis via DAP pathway; (S)-tetrahydrodipicolinate from L-aspartate: step 4/4. In terms of biological role, catalyzes the conversion of 4-hydroxy-tetrahydrodipicolinate (HTPA) to tetrahydrodipicolinate. The protein is 4-hydroxy-tetrahydrodipicolinate reductase of Helicobacter pylori (strain G27).